A 423-amino-acid chain; its full sequence is Histidine--tRNA ligase (423 aa).

It belongs to the class-II aminoacyl-tRNA synthetase family. As to quaternary structure, homodimer.

Its subcellular location is the cytoplasm. The enzyme catalyses tRNA(His) + L-histidine + ATP = L-histidyl-tRNA(His) + AMP + diphosphate + H(+). The sequence is that of Histidine--tRNA ligase from Anoxybacillus flavithermus (strain DSM 21510 / WK1).